The chain runs to 429 residues: TNF receptor-associated factor family protein DDB_G0267744 (429 aa).

The RING-type; degenerate zinc-finger motif lies at 22-60; it reads CVICSHLQVDIYQCVEGHFACKNCFLKMIELKKQCMTCR. 2 TRAF-type zinc fingers span residues 151–203 and 204–265; these read HHLK…GEFN and NHQD…SNSE.

The protein belongs to the TNF receptor-associated factor family.

The protein resides in the cytoplasm. In terms of biological role, probable adapter protein and signal transducer that links members of the tumor necrosis factor receptor family to different signaling pathways by association with the receptor cytoplasmic domain and kinases. The chain is TNF receptor-associated factor family protein DDB_G0267744 from Dictyostelium discoideum (Social amoeba).